A 193-amino-acid chain; its full sequence is Pilin-like protein PilA2 (193 aa).

The propeptide at 1 to 4 is leader sequence; it reads MRKG. L5 is subject to N-methylleucine. A helical membrane pass occupies residues 5 to 25; sequence LTLVEVLVTLVIMGIAFAALL.

The protein localises to the cell inner membrane. The protein resides in the cell outer membrane. It localises to the periplasm. Its function is as follows. Plays an essential role in natural DNA transformation but is not required for pilus biogenesis. This chain is Pilin-like protein PilA2 (pilA2), found in Thermus thermophilus (strain ATCC BAA-163 / DSM 7039 / HB27).